Reading from the N-terminus, the 214-residue chain is tRNA (guanine-N(7)-)-methyltransferase (214 aa).

S-adenosyl-L-methionine contacts are provided by Glu45, Glu70, Asp97, and Asp119. The active site involves Asp119. Residues Lys123, Asp155, and 192 to 195 (TEYE) each bind substrate.

The protein belongs to the class I-like SAM-binding methyltransferase superfamily. TrmB family.

It catalyses the reaction guanosine(46) in tRNA + S-adenosyl-L-methionine = N(7)-methylguanosine(46) in tRNA + S-adenosyl-L-homocysteine. The protein operates within tRNA modification; N(7)-methylguanine-tRNA biosynthesis. Functionally, catalyzes the formation of N(7)-methylguanine at position 46 (m7G46) in tRNA. This Clostridioides difficile (strain 630) (Peptoclostridium difficile) protein is tRNA (guanine-N(7)-)-methyltransferase.